The primary structure comprises 364 residues: Aminomethyltransferase (364 aa).

This sequence belongs to the GcvT family. The glycine cleavage system is composed of four proteins: P, T, L and H.

The catalysed reaction is N(6)-[(R)-S(8)-aminomethyldihydrolipoyl]-L-lysyl-[protein] + (6S)-5,6,7,8-tetrahydrofolate = N(6)-[(R)-dihydrolipoyl]-L-lysyl-[protein] + (6R)-5,10-methylene-5,6,7,8-tetrahydrofolate + NH4(+). Functionally, the glycine cleavage system catalyzes the degradation of glycine. The protein is Aminomethyltransferase of Shewanella sediminis (strain HAW-EB3).